Here is a 520-residue protein sequence, read N- to C-terminus: Succinyl-CoA:3-ketoacid coenzyme A transferase 2A, mitochondrial (520 aa).

Residues 1–39 constitute a mitochondrion transit peptide; it reads MAALRLLAWALPRGVSALRPPPALPHRLIRRYVSDRSGS. Positions 280 to 299 are disordered; the sequence is ERLTTRDSKPAPGSKDNDPS. The active-site 5-glutamyl coenzyme A thioester intermediate is the Glu-342.

It belongs to the 3-oxoacid CoA-transferase family. As to quaternary structure, homodimer.

Its subcellular location is the mitochondrion. The enzyme catalyses a 3-oxo acid + succinyl-CoA = a 3-oxoacyl-CoA + succinate. Its pathway is ketone metabolism; succinyl-CoA degradation; acetoacetyl-CoA from succinyl-CoA: step 1/1. In terms of biological role, key enzyme for ketone body catabolism. Transfers the CoA moiety from succinate to acetoacetate. Formation of the enzyme-CoA intermediate proceeds via an unstable anhydride species formed between the carboxylate groups of the enzyme and substrate. Probably play and important roles in the energy metabolism of spermatozoa. This is Succinyl-CoA:3-ketoacid coenzyme A transferase 2A, mitochondrial (Oxct2a) from Mus musculus (Mouse).